The sequence spans 64 residues: Putative H/ACA ribonucleoprotein complex subunit 3 (64 aa).

It belongs to the NOP10 family. In terms of assembly, component of the small nucleolar ribonucleoprotein particles containing H/ACA-type snoRNAs (H/ACA snoRNPs).

It localises to the nucleus. The protein localises to the nucleolus. In terms of biological role, required for ribosome biogenesis. Part of a complex which catalyzes pseudouridylation of rRNA. This involves the isomerization of uridine such that the ribose is subsequently attached to C5, instead of the normal N1. Pseudouridine ('psi') residues may serve to stabilize the conformation of rRNAs. The sequence is that of Putative H/ACA ribonucleoprotein complex subunit 3 (nola-3) from Caenorhabditis elegans.